Here is a 243-residue protein sequence, read N- to C-terminus: Protein GrpE (243 aa).

Belongs to the GrpE family. As to quaternary structure, homodimer.

It is found in the cytoplasm. In terms of biological role, participates actively in the response to hyperosmotic and heat shock by preventing the aggregation of stress-denatured proteins, in association with DnaK and GrpE. It is the nucleotide exchange factor for DnaK and may function as a thermosensor. Unfolded proteins bind initially to DnaJ; upon interaction with the DnaJ-bound protein, DnaK hydrolyzes its bound ATP, resulting in the formation of a stable complex. GrpE releases ADP from DnaK; ATP binding to DnaK triggers the release of the substrate protein, thus completing the reaction cycle. Several rounds of ATP-dependent interactions between DnaJ, DnaK and GrpE are required for fully efficient folding. The sequence is that of Protein GrpE from Mycoplasma mobile (strain ATCC 43663 / 163K / NCTC 11711) (Mesomycoplasma mobile).